The primary structure comprises 92 residues: Beta-2-microglobulin (92 aa).

The region spanning 2–91 is the Ig-like C1-type domain; that stretch reads PQIQVYTRHP…VSLNEPKTVI (90 aa). A disulfide bridge links C22 with C77.

The protein belongs to the beta-2-microglobulin family. Heterodimer of an alpha chain and a beta chain. Beta-2-microglobulin is the beta-chain of major histocompatibility complex class I molecules.

Its subcellular location is the secreted. In terms of biological role, component of the class I major histocompatibility complex (MHC). Involved in the presentation of peptide antigens to the immune system. The polypeptide is Beta-2-microglobulin (B2m) (Mus cervicolor (Fawn-colored mouse)).